The chain runs to 602 residues: (R)-limonene synthase (602 aa).

Mg(2+) contacts are provided by D356, D360, D500, T504, and E508. The short motif at 356–360 (DDVYD) is the DDXXD motif element.

This sequence belongs to the terpene synthase family. It depends on Mg(2+) as a cofactor. Mn(2+) is required as a cofactor.

It carries out the reaction (2E)-geranyl diphosphate = (4R)-limonene + diphosphate. Functionally, catalyzes the formation of (R)-(+)-limonene, terpinolene, (1R,5S)-(+)-camphene, (1R,5R)-(+)-alpha-pinene, beta-myrcene and traces of alpha-phellandrene. In Lavandula angustifolia (Lavender), this protein is (R)-limonene synthase.